The primary structure comprises 98 residues: NADH-ubiquinone oxidoreductase chain 4L (98 aa).

A run of 3 helical transmembrane segments spans residues 2 to 22, 29 to 49, and 61 to 81; these read PPIFANIILAFATAFLGTLIF, SLLCLEGMMLSMFILSTLIIL, and ILLLVFAACEAAIGLALLVMV.

The protein belongs to the complex I subunit 4L family. As to quaternary structure, core subunit of respiratory chain NADH dehydrogenase (Complex I) which is composed of 45 different subunits.

Its subcellular location is the mitochondrion inner membrane. It carries out the reaction a ubiquinone + NADH + 5 H(+)(in) = a ubiquinol + NAD(+) + 4 H(+)(out). Its function is as follows. Core subunit of the mitochondrial membrane respiratory chain NADH dehydrogenase (Complex I) which catalyzes electron transfer from NADH through the respiratory chain, using ubiquinone as an electron acceptor. Part of the enzyme membrane arm which is embedded in the lipid bilayer and involved in proton translocation. This Avahi unicolor (Sambirano woolly lemur) protein is NADH-ubiquinone oxidoreductase chain 4L (MT-ND4L).